The chain runs to 77 residues: Small ribosomal subunit protein bS21 (77 aa).

The disordered stretch occupies residues 55-77 (RKLARKRAQREGLMSNGRISALR).

Belongs to the bacterial ribosomal protein bS21 family.

This chain is Small ribosomal subunit protein bS21, found in Bartonella quintana (strain Toulouse) (Rochalimaea quintana).